Consider the following 98-residue polypeptide: Large ribosomal subunit protein uL23 (98 aa).

This sequence belongs to the universal ribosomal protein uL23 family. As to quaternary structure, part of the 50S ribosomal subunit. Contacts protein L29, and trigger factor when it is bound to the ribosome.

Functionally, one of the early assembly proteins it binds 23S rRNA. One of the proteins that surrounds the polypeptide exit tunnel on the outside of the ribosome. Forms the main docking site for trigger factor binding to the ribosome. This is Large ribosomal subunit protein uL23 from Frankia casuarinae (strain DSM 45818 / CECT 9043 / HFP020203 / CcI3).